Reading from the N-terminus, the 147-residue chain is FALSWRSYKHTNSQFLYFAPDLIFDEERMRQSAMFELCQGMHQISLQFVRLQLSFEEYTIMKVLLLLSTVPKDGLKSQAAFEEMRANYIKELKKMVTKCPSNSGQSWQRFYQLTKLLDSMHDLVSDLLEFCFYTFRESQALKVEFPA.

Residues 1-147 enclose the NR LBD domain; it reads FALSWRSYKH…SQALKVEFPA (147 aa). Residues R6 and T134 each coordinate 21-hydroxyprogesterone. Aldosterone-binding residues include R6 and T134. Positions 6 and 134 each coordinate progesterone.

This sequence belongs to the nuclear hormone receptor family. NR3 subfamily.

The protein localises to the cytoplasm. It localises to the nucleus. Its function is as follows. Receptor for both mineralocorticoids (MC) such as aldosterone and glucocorticoids (GC) such as corticosterone or cortisol. Binds to mineralocorticoid response elements (MRE) and transactivates target genes. The effect of MC is to increase ion and water transport and thus raise extracellular fluid volume and blood pressure and lower potassium levels. The polypeptide is Mineralocorticoid receptor (NR3C2) (Gallus gallus (Chicken)).